The primary structure comprises 273 residues: NAD(P)H-hydrate epimerase (273 aa).

The 209-residue stretch at 52–260 (AQQIDQELFN…GIIQKYELNL (209 aa)) folds into the YjeF N-terminal domain. Residue 105 to 109 (NNGGD) coordinates (6S)-NADPHX. Positions 106 and 170 each coordinate K(+). (6S)-NADPHX is bound by residues 174 to 180 (GFSFKGE) and Asp203. Position 206 (Ser206) interacts with K(+).

Belongs to the NnrE/AIBP family. It depends on K(+) as a cofactor.

The catalysed reaction is (6R)-NADHX = (6S)-NADHX. It catalyses the reaction (6R)-NADPHX = (6S)-NADPHX. In terms of biological role, catalyzes the epimerization of the S- and R-forms of NAD(P)HX, a damaged form of NAD(P)H that is a result of enzymatic or heat-dependent hydration. This is a prerequisite for the S-specific NAD(P)H-hydrate dehydratase to allow the repair of both epimers of NAD(P)HX. The protein is NAD(P)H-hydrate epimerase of Branchiostoma floridae (Florida lancelet).